Consider the following 149-residue polypeptide: Nucleoside diphosphate kinase (149 aa).

ATP is bound by residues Lys-9, Phe-57, Arg-85, Thr-91, Arg-102, and Asn-112. The active-site Pros-phosphohistidine intermediate is His-115.

This sequence belongs to the NDK family. Homotetramer. The cofactor is Mg(2+).

The protein localises to the cytoplasm. It carries out the reaction dZDP + ATP = dZTP + ADP. The catalysed reaction is a 2'-deoxyribonucleoside 5'-diphosphate + ATP = a 2'-deoxyribonucleoside 5'-triphosphate + ADP. It catalyses the reaction a ribonucleoside 5'-diphosphate + ATP = a ribonucleoside 5'-triphosphate + ADP. Its pathway is purine metabolism. Functionally, major role in the synthesis of nucleoside triphosphates other than ATP. The ATP gamma phosphate is transferred to the NDP beta phosphate via a ping-pong mechanism, using a phosphorylated active-site intermediate. In terms of biological role, (Microbial infection) Catalyzes the phosphorylation of dZDP to dZTP, when the bacterium is infected by a phage that produces the substrate for the synthesis of dZTP (2- amino-2'-deoxyadenosine 5'-triphosphate), which is then used by the phage as a DNA polymerase substrate. The chain is Nucleoside diphosphate kinase from Synechococcus sp. (strain JA-3-3Ab) (Cyanobacteria bacterium Yellowstone A-Prime).